The chain runs to 227 residues: Ubiquitin domain-containing protein 1 (227 aa).

The tract at residues 1 to 35 is disordered; it reads MGNCVGRQRRERPAAPGHPRKRAGRNEPLKKERLK. A compositionally biased stretch (basic and acidic residues) spans 24 to 35; sequence GRNEPLKKERLK. Residues 149–224 form the Ubiquitin-like domain; it reads FPLKVRLSTG…IQVIINQPPP (76 aa).

Interacts with UBTD1.

May be involved in the regulation of cellular senescence through a positive feedback loop with TP53. Is a TP53 downstream target gene that increases the stability of TP53 protein by promoting the ubiquitination and degradation of MDM2. This is Ubiquitin domain-containing protein 1 (Ubtd1) from Rattus norvegicus (Rat).